Here is a 239-residue protein sequence, read N- to C-terminus: Interleukin-27 subunit alpha (239 aa).

The N-terminal stretch at 1-28 (MGQMADDLGWRLSLLLLSLLLARAGVWG) is a signal peptide. A glycan (N-linked (GlcNAc...) asparagine) is linked at N89. Residues 167–186 (EEENEAGRELLPGAPGGPSK) form a disordered region.

This sequence belongs to the IL-6 superfamily. In terms of assembly, heterodimer with EBI3; not disulfide-linked. This heterodimer is known as interleukin IL-27. O-glycosylated.

It is found in the secreted. Functionally, associates with EBI3 to form the IL-27 interleukin, a heterodimeric cytokine which functions in innate immunity. Cytokine with pro- and anti-inflammatory properties, that can regulate T-helper cell development, suppress T-cell proliferation, stimulate cytotoxic T-cell activity, induce isotype switching in B-cells, and that has diverse effects on innate immune cells. Among its target cells are CD4 T-helper cells which can differentiate in type 1 effector cells (TH1), type 2 effector cells (TH2) and IL17 producing helper T-cells (TH17). It drives rapid clonal expansion of naive but not memory CD4 T-cells. It also strongly synergizes with IL-12 to trigger interferon-gamma/IFN-gamma production of naive CD4 T-cells, binds to the cytokine receptor WSX-1/TCCR which appears to be required but not sufficient for IL-27-mediated signal transduction. IL-27 potentiate the early phase of TH1 response and suppress TH2 and TH17 differentiation. It induces the differentiation of TH1 cells via two distinct pathways, p38 MAPK/TBX21- and ICAM1/ITGAL/ERK-dependent pathways. It also induces STAT1, STAT3, STAT4 and STAT5 phosphorylation and activates TBX21/T-Bet via STAT1 with resulting IL12RB2 up-regulation, an event crucial to TH1 cell commitment. It suppresses the expression of GATA3, the inhibitor TH1 cells development. In CD8 T-cells, it activates STATs as well as GZMB. IL-27 reveals to be a potent inhibitor of TH17 cell development and of IL-17 production. Indeed IL27 alone is also able to inhibit the production of IL17 by CD4 and CD8 T-cells. While IL-27 suppressed the development of pro-inflammatory Th17 cells via STAT1, it inhibits the development of anti-inflammatory inducible regulatory T-cells, iTreg, independently of STAT1. IL-27 also has an effect on cytokine production, it suppresses pro-inflammatory cytokine production such as IL2, IL4, IL5 and IL6 and activates suppressors of cytokine signaling such as SOCS1 and SOCS3. Apart from suppression of cytokine production, IL-27 also antagonizes the effects of some cytokines such as IL6 through direct effects on T-cells. Another important role of IL-27 is its antitumor activity as well as its antiangiogenic activity with activation of production of antiangiogenic chemokines such as IP-10/CXCL10 and MIG/CXCL9. In vein endothelial cells, it induces IRF1/interferon regulatory factor 1 and increase the expression of MHC class II transactivator/CIITA with resulting up-regulation of major histocompatibility complex class II. This Sus scrofa (Pig) protein is Interleukin-27 subunit alpha (IL27).